A 152-amino-acid polypeptide reads, in one-letter code: UPF0266 membrane protein YobD (152 aa).

The next 3 membrane-spanning stretches (helical) occupy residues 6–26 (LVLI…QFIM), 45–65 (VDSV…VTSH), and 67–87 (AQMT…IFWI).

It belongs to the UPF0266 family.

It localises to the cell inner membrane. The protein is UPF0266 membrane protein YobD of Salmonella enteritidis PT4 (strain P125109).